The primary structure comprises 406 residues: Tryptophan synthase beta chain (406 aa).

Position 99 is an N6-(pyridoxal phosphate)lysine (Lys-99).

Belongs to the TrpB family. In terms of assembly, tetramer of two alpha and two beta chains. The cofactor is pyridoxal 5'-phosphate.

It carries out the reaction (1S,2R)-1-C-(indol-3-yl)glycerol 3-phosphate + L-serine = D-glyceraldehyde 3-phosphate + L-tryptophan + H2O. It participates in amino-acid biosynthesis; L-tryptophan biosynthesis; L-tryptophan from chorismate: step 5/5. Its function is as follows. The beta subunit is responsible for the synthesis of L-tryptophan from indole and L-serine. This Brucella anthropi (strain ATCC 49188 / DSM 6882 / CCUG 24695 / JCM 21032 / LMG 3331 / NBRC 15819 / NCTC 12168 / Alc 37) (Ochrobactrum anthropi) protein is Tryptophan synthase beta chain.